A 318-amino-acid polypeptide reads, in one-letter code: Ribosomal RNA small subunit methyltransferase H (318 aa).

Residues 38–40 (GGH), Asp58, Tyr86, Asp107, and Gln114 contribute to the S-adenosyl-L-methionine site.

It belongs to the methyltransferase superfamily. RsmH family.

It is found in the cytoplasm. It carries out the reaction cytidine(1402) in 16S rRNA + S-adenosyl-L-methionine = N(4)-methylcytidine(1402) in 16S rRNA + S-adenosyl-L-homocysteine + H(+). Specifically methylates the N4 position of cytidine in position 1402 (C1402) of 16S rRNA. In Methylibium petroleiphilum (strain ATCC BAA-1232 / LMG 22953 / PM1), this protein is Ribosomal RNA small subunit methyltransferase H.